We begin with the raw amino-acid sequence, 855 residues long: MDIRKLFLDYFASKGHAVYESMPLVPDDPTLLFTNAGMVQFKDIFTGKVPAPTNPRATSCQLCIRAGGKHNDLENVGYTSRHHTLFEMLGNFSFGDYFKEQAIDHAWEFVTEVLGFSKEVLWVTVHESDDEAFELWQKHVDASRIKRMGDKDNFWQMGDTGACGPCSEIFVDQGEEKFHGSEDYFGGDGDRFLEIWNLVFMQYERSSDGTLTPLPKPSIDTGMGLERVAALKEGKSSNFDSSLFMPMIRKVEELTGKPYHYESGASYRVIADHIRSICFLLAQGVNFDKEGRGYVLRRILRRAVRHGYLLGLNAPFLHEVAEVVCGQMGDHYGYLKEKREHIKRLTFQEEERFFATIAGGMEVFKKELEKTQSVFSGEAAFKLYDTFGFPLDLTEDMLREKGIRVDLAAFEACMKEQRARAKASWKGSGDELKEGDFALLLEAFPSNSFVGYEKEAHTSKLLAILNRDYKRVSSLGAGESGFVMLEETPFYAESGGQCGDEGELRARGRIVAQVQGTKKYFGLNLSRIEALDEICEGETLEAVVSRERLEVQKHHSATHLLHAILRQKLGDHVAQAGSLVEKDRLRFDFSHPKALTHEEVGMVEEEVNRLISLSIPSRTREMRVDEAKASGAMALFGEKYGDLVRVVDFGEASVELCGGTHVENSAHIGSFYITKESGVSAGVRRIEAVCGMAAYHYGKEALQEIAEAKEILKAKELKLGIEKLKEQVRELKSEMSALSSSKSGAISEGVMMGETRVIVETLEAGDIKNSIDEIKNRYEKVAVLLLQVKEEKVMLAAGVKGEDRIKAGAWIKEIAPILGGGGGGRDDFAQAGGKDASKADEALQSAKNYALERLA.

4 residues coordinate Zn(2+): H555, H559, C657, and H661.

This sequence belongs to the class-II aminoacyl-tRNA synthetase family. Requires Zn(2+) as cofactor.

It localises to the cytoplasm. The enzyme catalyses tRNA(Ala) + L-alanine + ATP = L-alanyl-tRNA(Ala) + AMP + diphosphate. Functionally, catalyzes the attachment of alanine to tRNA(Ala) in a two-step reaction: alanine is first activated by ATP to form Ala-AMP and then transferred to the acceptor end of tRNA(Ala). Also edits incorrectly charged Ser-tRNA(Ala) and Gly-tRNA(Ala) via its editing domain. The chain is Alanine--tRNA ligase from Wolinella succinogenes (strain ATCC 29543 / DSM 1740 / CCUG 13145 / JCM 31913 / LMG 7466 / NCTC 11488 / FDC 602W) (Vibrio succinogenes).